The sequence spans 225 residues: UPF0758 protein NMB1038 (225 aa).

The 123-residue stretch at 102 to 224 (VLSDPDTVAD…VCSFRQLGLM (123 aa)) folds into the MPN domain. Zn(2+) contacts are provided by histidine 173, histidine 175, and aspartate 186. The JAMM motif signature appears at 173–186 (HNHPGGSPEPSQED).

This sequence belongs to the UPF0758 family.

The polypeptide is UPF0758 protein NMB1038 (Neisseria meningitidis serogroup B (strain ATCC BAA-335 / MC58)).